The chain runs to 931 residues: MDLATTNDAAGAGNDFDTARITGDIDALAAKHAGHEDVFRAAVSRLLKAELAKVRDAAQAKLLRDRHGRRCAERLCFIQDEIIRLSFSAATRHLYHSPIPSDGERMAVVATGGYGRGLMAPESDIDLLFILPYKQTAWGEQVAEAILYCLWDMGLNVGHATRSVNESIRQARRDMTVRTGILETRFLAGDRALYDELVTRFDTEVVQGTAAEFVTAKLAEREERHRRAGQSRYLVEPNVKDGKGGLRDLHTLFWIAKYVYRVHESRELLGCGVFDVREYRTFRRCADFLWSVRCNLHFATGRAEERLSFDLQREIAVRLGYTSHPGMQDVERFMKHYFLTAKDVGDLTAILCAKLEDQQAKPAPVLGRMMSRRRPGTELRRVPEGDDFIIDNNRINLAAPDVFKRDPVNLIRVFRLAQKNNLAFHPDALRTVTRSRRLINAQLRENPEANRLFMEILTSNDAETVLRRMNETGVLGHFIRAFGKIVSMMQFNMYHHYTVDEHLLRCIGILQDIERGGNDELALASELMRKIHPEHRPVIYITTLLHDIAKGRPEDHSIAGARVARRLCPRLGFNASDTELIAWLIEQHLTMSKVAQSRDLSDRKTIENFAAVVQSVEQMKLLTILTTADIRGVGPGVWNGWKAQLLRTLYYETEPVLTGGFSEVNRVQRIAEAQAEFRAAFTEWSEPELNAYIARHYPAYWLKVDLAHKIRHARFLRASEQGGRKLNINVGFDEARGVTELTIFAADHPWLLSIIAGACASAGANIVDAQIYTTTDGQALDTIAISREYDRDEDEGRRAARIGEIIEQVIDGRLRLPDVVARRAAGKTRLRPFVVEPKVIVNNQWSDRHTVIEVSGLDRPGLLFQLTAAISKLNLNIASAHVATFGERARDVFYVTDLLGARITAPTRQAAIKRALIHLLANGGAAEQSVG.

The tract at residues 1 to 383 (MDLATTNDAA…RPGTELRRVP (383 aa)) is uridylyltransferase. A uridylyl-removing region spans residues 384–739 (EGDDFIIDNN…VGFDEARGVT (356 aa)). In terms of domain architecture, HD spans 499–622 (VDEHLLRCIG…VQSVEQMKLL (124 aa)). ACT domains are found at residues 740–822 (ELTI…VVAR) and 851–931 (VIEV…QSVG).

It belongs to the GlnD family. It depends on Mg(2+) as a cofactor.

It catalyses the reaction [protein-PII]-L-tyrosine + UTP = [protein-PII]-uridylyl-L-tyrosine + diphosphate. It carries out the reaction [protein-PII]-uridylyl-L-tyrosine + H2O = [protein-PII]-L-tyrosine + UMP + H(+). With respect to regulation, uridylyltransferase (UTase) activity is inhibited by glutamine, while glutamine activates uridylyl-removing (UR) activity. Its function is as follows. Modifies, by uridylylation and deuridylylation, the PII regulatory proteins (GlnB and homologs), in response to the nitrogen status of the cell that GlnD senses through the glutamine level. Under low glutamine levels, catalyzes the conversion of the PII proteins and UTP to PII-UMP and PPi, while under higher glutamine levels, GlnD hydrolyzes PII-UMP to PII and UMP (deuridylylation). Thus, controls uridylylation state and activity of the PII proteins, and plays an important role in the regulation of nitrogen assimilation and metabolism. This is Bifunctional uridylyltransferase/uridylyl-removing enzyme from Nitrobacter hamburgensis (strain DSM 10229 / NCIMB 13809 / X14).